The primary structure comprises 486 residues: NADH-quinone oxidoreductase subunit N 1 (486 aa).

The next 14 helical transmembrane spans lie at 15–35 (FLPE…DPVI), 46–66 (ISLI…GIAG), 72–92 (MLMV…VGIL), 111–128 (YHAL…MAAS), 131–151 (LIMV…LAGY), 166–186 (FLLG…IYGL), 208–228 (FVGI…SAAP), 241–261 (PTPV…AIFL), 276–296 (QPLV…AAIL), 303–323 (MLAY…TAHS), 331–351 (MFYL…VSVL), 375–395 (AAMF…GGFF), 410–432 (IWLT…RILV), and 455–475 (FALI…GWVL).

The protein belongs to the complex I subunit 2 family. NDH-1 is composed of 14 different subunits. Subunits NuoA, H, J, K, L, M, N constitute the membrane sector of the complex.

Its subcellular location is the cell inner membrane. It catalyses the reaction a quinone + NADH + 5 H(+)(in) = a quinol + NAD(+) + 4 H(+)(out). Its function is as follows. NDH-1 shuttles electrons from NADH, via FMN and iron-sulfur (Fe-S) centers, to quinones in the respiratory chain. The immediate electron acceptor for the enzyme in this species is believed to be ubiquinone. Couples the redox reaction to proton translocation (for every two electrons transferred, four hydrogen ions are translocated across the cytoplasmic membrane), and thus conserves the redox energy in a proton gradient. This Solibacter usitatus (strain Ellin6076) protein is NADH-quinone oxidoreductase subunit N 1.